We begin with the raw amino-acid sequence, 171 residues long: Phosphopantetheine adenylyltransferase (171 aa).

T9 lines the substrate pocket. ATP is bound by residues 9-10 and H17; that span reads TF. Substrate-binding residues include K41, L73, and R87. Residues 88-90, E98, and 123-129 each bind ATP; these read GLR and YQFISGT.

The protein belongs to the bacterial CoaD family. Homohexamer. Mg(2+) is required as a cofactor.

The protein localises to the cytoplasm. The catalysed reaction is (R)-4'-phosphopantetheine + ATP + H(+) = 3'-dephospho-CoA + diphosphate. It participates in cofactor biosynthesis; coenzyme A biosynthesis; CoA from (R)-pantothenate: step 4/5. Reversibly transfers an adenylyl group from ATP to 4'-phosphopantetheine, yielding dephospho-CoA (dPCoA) and pyrophosphate. The polypeptide is Phosphopantetheine adenylyltransferase (Paraburkholderia xenovorans (strain LB400)).